We begin with the raw amino-acid sequence, 447 residues long: Cysteine--tRNA ligase (447 aa).

Cys28 is a binding site for Zn(2+). Residues 30 to 40 (PTVYNYIHIGN) carry the 'HIGH' region motif. Positions 211, 236, and 240 each coordinate Zn(2+). A 'KMSKS' region motif is present at residues 268–272 (KMSKS). An ATP-binding site is contributed by Lys271.

It belongs to the class-I aminoacyl-tRNA synthetase family. Monomer. Requires Zn(2+) as cofactor.

It is found in the cytoplasm. It catalyses the reaction tRNA(Cys) + L-cysteine + ATP = L-cysteinyl-tRNA(Cys) + AMP + diphosphate. This is Cysteine--tRNA ligase from Streptococcus pyogenes serotype M18 (strain MGAS8232).